A 403-amino-acid chain; its full sequence is MTETKVSEFQLKGKYGKYGGQYVPEVLMPALEELDVGYEKYKNDPESLAELDHYLRDFAGRETPLYFARNLSKKYGTKVYLKREDLVHGGAHKLNNALGQALLAKFMGKTRLIAETGAGQHGTATAMVGATLGFETIVYMGAKDIKRQQMNAYRMELMGTEVRAVETGSKTLKDAINEAMRDWVTNIENTHYLIGSVVGPHPYPMIVRDFQSVIGKEVKEQAMEKEGRLPDSIIACAGGGSNAMGTFHPFIEDREVKLIAVEAGGKGLKCTEKAALHSASLCIGEEGILHGARTKILQDKNGQILESESVSAGLDYSGVGPELAYLSESGRVTARYVTDDEALDAFNELSRLEGIIPALESSHALAYLKKAAESGELGEFVVVNLSGRGDKDLETVLSLRRGV.

Lys93 is subject to N6-(pyridoxal phosphate)lysine.

This sequence belongs to the TrpB family. As to quaternary structure, tetramer of two alpha and two beta chains. It depends on pyridoxal 5'-phosphate as a cofactor.

The enzyme catalyses (1S,2R)-1-C-(indol-3-yl)glycerol 3-phosphate + L-serine = D-glyceraldehyde 3-phosphate + L-tryptophan + H2O. The protein operates within amino-acid biosynthesis; L-tryptophan biosynthesis; L-tryptophan from chorismate: step 5/5. Its function is as follows. The beta subunit is responsible for the synthesis of L-tryptophan from indole and L-serine. The polypeptide is Tryptophan synthase beta chain 1 (trpB1) (Methanosarcina acetivorans (strain ATCC 35395 / DSM 2834 / JCM 12185 / C2A)).